Reading from the N-terminus, the 149-residue chain is Ribonuclease pancreatic (149 aa).

The signal sequence occupies residues 1–25 (MGLEKSLILFPLFVLLLGWVQPSLG). The disordered stretch occupies residues 30–49 (AQKFERQHMDSSGSSNNSPT). Residues lysine 32 and arginine 35 each contribute to the substrate site. The Proton acceptor role is filled by histidine 37. Over residues 39-49 (DSSGSSNNSPT) the composition is skewed to polar residues. Cystine bridges form between cysteine 51-cysteine 109, cysteine 65-cysteine 120, cysteine 83-cysteine 135, and cysteine 90-cysteine 97. Residue 66–70 (KPVNT) participates in substrate binding. N-linked (GlcNAc...) asparagine glycosylation occurs at asparagine 87. Lysine 91 is a binding site for substrate. The Proton donor role is filled by histidine 144.

It belongs to the pancreatic ribonuclease family. Monomer. Interacts with and forms tight 1:1 complexes with RNH1. Dimerization of two such complexes may occur. Interaction with RNH1 inhibits this protein. In terms of tissue distribution, pancreas.

Its subcellular location is the secreted. It catalyses the reaction an [RNA] containing cytidine + H2O = an [RNA]-3'-cytidine-3'-phosphate + a 5'-hydroxy-ribonucleotide-3'-[RNA].. It carries out the reaction an [RNA] containing uridine + H2O = an [RNA]-3'-uridine-3'-phosphate + a 5'-hydroxy-ribonucleotide-3'-[RNA].. Endonuclease that catalyzes the cleavage of RNA on the 3' side of pyrimidine nucleotides. Acts on single-stranded and double-stranded RNA. The chain is Ribonuclease pancreatic (Rnase1) from Mus pahari (Gairdner's shrew-mouse).